The primary structure comprises 270 residues: Monofunctional glycosyltransferase (270 aa).

Residues 1–10 show a composition bias toward polar residues; sequence MKRSQRMNNS. Residues 1-36 form a disordered region; it reads MKRSQRMNNSPERHSQYRNEPHYNTYYQPVGKPPKK. Over residues 11–21 the composition is skewed to basic and acidic residues; sequence PERHSQYRNEP. A helical transmembrane segment spans residues 42-62; the sequence is IFLRLFIIFVFIYALFIGLMY.

This sequence belongs to the glycosyltransferase 51 family.

Its subcellular location is the cell membrane. The enzyme catalyses [GlcNAc-(1-&gt;4)-Mur2Ac(oyl-L-Ala-gamma-D-Glu-L-Lys-D-Ala-D-Ala)](n)-di-trans,octa-cis-undecaprenyl diphosphate + beta-D-GlcNAc-(1-&gt;4)-Mur2Ac(oyl-L-Ala-gamma-D-Glu-L-Lys-D-Ala-D-Ala)-di-trans,octa-cis-undecaprenyl diphosphate = [GlcNAc-(1-&gt;4)-Mur2Ac(oyl-L-Ala-gamma-D-Glu-L-Lys-D-Ala-D-Ala)](n+1)-di-trans,octa-cis-undecaprenyl diphosphate + di-trans,octa-cis-undecaprenyl diphosphate + H(+). It participates in cell wall biogenesis; peptidoglycan biosynthesis. Peptidoglycan polymerase that catalyzes glycan chain elongation using lipid-linked disaccharide-pentapeptide as the substrate. This is Monofunctional glycosyltransferase from Staphylococcus haemolyticus (strain JCSC1435).